Here is a 426-residue protein sequence, read N- to C-terminus: Enolase (426 aa).

Position 165 (glutamine 165) interacts with (2R)-2-phosphoglycerate. Glutamate 209 functions as the Proton donor in the catalytic mechanism. Mg(2+) is bound by residues aspartate 244, glutamate 287, and aspartate 313. The (2R)-2-phosphoglycerate site is built by lysine 338, arginine 367, serine 368, and lysine 389. The active-site Proton acceptor is lysine 338.

It belongs to the enolase family. Requires Mg(2+) as cofactor.

It is found in the cytoplasm. The protein localises to the secreted. The protein resides in the cell surface. It carries out the reaction (2R)-2-phosphoglycerate = phosphoenolpyruvate + H2O. It participates in carbohydrate degradation; glycolysis; pyruvate from D-glyceraldehyde 3-phosphate: step 4/5. Its function is as follows. Catalyzes the reversible conversion of 2-phosphoglycerate (2-PG) into phosphoenolpyruvate (PEP). It is essential for the degradation of carbohydrates via glycolysis. This chain is Enolase, found in Methanococcus maripaludis (strain DSM 14266 / JCM 13030 / NBRC 101832 / S2 / LL).